The sequence spans 874 residues: Dynein regulatory complex subunit 7 (874 aa).

Residues 1–20 (MEVLREKVEEEEEAEREEAA) form a disordered region. Coiled coils occupy residues 1-67 (MEVL…SAEL) and 257-297 (RFEQ…DALH). Residues 386-400 (TEEDDSGINDEDDVE) are compositionally biased toward acidic residues. The disordered stretch occupies residues 386–410 (TEEDDSGINDEDDVENLGKEDEDKS). A compositionally biased stretch (basic and acidic residues) spans 401 to 410 (NLGKEDEDKS).

It belongs to the DRC7 family. Component of the nexin-dynein regulatory complex (N-DRC). Interacts with TCTE1/DRC5. Interacts with DRC3 and GAS8/DRC4. In terms of tissue distribution, expressed in the testis.

Its subcellular location is the cell projection. It localises to the cilium. The protein resides in the flagellum. It is found in the cytoplasm. The protein localises to the cytoskeleton. Its subcellular location is the cilium axoneme. It localises to the flagellum axoneme. Component of the nexin-dynein regulatory complex (N-DRC) a key regulator of ciliary/flagellar motility which maintains the alignment and integrity of the distal axoneme and regulates microtubule sliding in motile axonemes. Involved in the regulation of flagellar motility. Essential for male fertility, sperm head morphogenesis and sperm flagellum formation. The sequence is that of Dynein regulatory complex subunit 7 (DRC7) from Pan troglodytes (Chimpanzee).